Here is a 503-residue protein sequence, read N- to C-terminus: Aromatase (503 aa).

Helical transmembrane passes span 19–39 (EVMPVATLPILLLTGFLFFVW) and 51–71 (GYCMGIGPLISHLRFLWMGLG). Residues 294–324 (ENVNQCILEMMIAAPDTLSVTVFFMLCLIAQ) form a substrate-binding pocket region. Residues D309 and M374 each coordinate substrate. C437 is a binding site for heme.

It belongs to the cytochrome P450 family. Heme is required as a cofactor. As to expression, expressed in placenta. Highly expressed in follicles (0 hour:hCG), followed by a drop (12-24 hour:hCG) and by an increase (30-39 hour:hCG). Highly expressed in corpora lutea. Also expressed in granulosa cell layer. Not expressed in theca interna.

The protein resides in the endoplasmic reticulum membrane. Its subcellular location is the microsome membrane. The catalysed reaction is testosterone + 3 reduced [NADPH--hemoprotein reductase] + 3 O2 = 17beta-estradiol + formate + 3 oxidized [NADPH--hemoprotein reductase] + 4 H2O + 4 H(+). The enzyme catalyses androst-4-ene-3,17-dione + 3 reduced [NADPH--hemoprotein reductase] + 3 O2 = estrone + formate + 3 oxidized [NADPH--hemoprotein reductase] + 4 H2O + 4 H(+). It catalyses the reaction androst-4-ene-3,17-dione + reduced [NADPH--hemoprotein reductase] + O2 = 19-hydroxyandrost-4-ene-3,17-dione + oxidized [NADPH--hemoprotein reductase] + H2O + H(+). It carries out the reaction 19-hydroxyandrost-4-ene-3,17-dione + reduced [NADPH--hemoprotein reductase] + O2 = 19-oxo-androst-4-ene-3,17-dione + oxidized [NADPH--hemoprotein reductase] + 2 H2O + H(+). The catalysed reaction is 19-oxo-androst-4-ene-3,17-dione + reduced [NADPH--hemoprotein reductase] + O2 = estrone + formate + oxidized [NADPH--hemoprotein reductase] + H2O + 2 H(+). The enzyme catalyses estrone + reduced [NADPH--hemoprotein reductase] + O2 = 2-hydroxyestrone + oxidized [NADPH--hemoprotein reductase] + H2O + H(+). It catalyses the reaction 17beta-hydroxy-5alpha-androstan-3-one + reduced [NADPH--hemoprotein reductase] + O2 = 17beta,19-dihydroxy-3-oxo-5alpha-androstanone + oxidized [NADPH--hemoprotein reductase] + H2O + H(+). It carries out the reaction 17beta,19-dihydroxy-3-oxo-5alpha-androstanone + reduced [NADPH--hemoprotein reductase] + O2 = 17beta-hydroxy-3,19-dioxo-5alpha-androstanone + oxidized [NADPH--hemoprotein reductase] + 2 H2O + H(+). The catalysed reaction is 17beta-hydroxy-3,19-dioxo-5alpha-androstanone + reduced [NADPH--hemoprotein reductase] + O2 = 17beta-hydroxy-3-oxo-19-nor-5alpha-androst-1-ene + formate + oxidized [NADPH--hemoprotein reductase] + H2O + 2 H(+). The protein operates within steroid hormone biosynthesis. In terms of biological role, a cytochrome P450 monooxygenase that catalyzes the conversion of C19 androgens, androst-4-ene-3,17-dione (androstenedione) and testosterone to the C18 estrogens, estrone and estradiol, respectively. Catalyzes three successive oxidations of C19 androgens: two conventional oxidations at C19 yielding 19-hydroxy and 19-oxo/19-aldehyde derivatives, followed by a third oxidative aromatization step that involves C1-beta hydrogen abstraction combined with cleavage of the C10-C19 bond to yield a phenolic A ring and formic acid. Alternatively, the third oxidative reaction yields a 19-norsteroid and formic acid. Converts dihydrotestosterone to delta1,10-dehydro 19-nordihydrotestosterone and may play a role in homeostasis of this potent androgen. Also displays 2-hydroxylase activity toward estrone. Mechanistically, uses molecular oxygen inserting one oxygen atom into a substrate, and reducing the second into a water molecule, with two electrons provided by NADPH via cytochrome P450 reductase (CPR; NADPH-ferrihemoprotein reductase). The chain is Aromatase (CYP19A1) from Equus caballus (Horse).